Reading from the N-terminus, the 501-residue chain is Type B diterpene cyclase (501 aa).

The protein belongs to the terpene synthase family. Monomer. Requires Mg(2+) as cofactor.

The catalysed reaction is geranylgeranyl diphosphate = tuberculosinyl diphosphate. Its activity is regulated as follows. Strongly inhibited by 15-aza-dihydrogeranylgeraniol and 5-isopropyl-N,N,N,2-tetramethyl-4-(piperidine-1-carbonyloxy)benzenaminium chloride (Amo-1618). Inhibited by GGPP concentrations higher than 50 uM. Its function is as follows. Catalyzes the formation of tuberculosinyl diphosphate from geranylgeranyl diphosphate (GGPP). It could also react with (14R/S)-14,15-oxidoGGPP to generate 3alpha- and 3beta-hydroxytuberculosinyl diphosphate. This is Type B diterpene cyclase from Mycobacterium tuberculosis (strain ATCC 25618 / H37Rv).